We begin with the raw amino-acid sequence, 499 residues long: Endoglucanase (499 aa).

The signal sequence occupies residues 1–29 (MKRSISIFITCLLITLLTMGGMLASPASA). Substrate is bound by residues His-65, 69–70 (WY), Tyr-96, and His-131. Glu-169 (proton donor) is an active-site residue. Tyr-231 is a binding site for substrate. Glu-257 (nucleophile) is an active-site residue. Residues 263 to 264 (AS), Trp-291, and 296 to 298 (KQE) each bind substrate. In terms of domain architecture, CBM3 spans 350–499 (QENGISVQYR…GKLIWGTEPN (150 aa)).

The protein belongs to the glycosyl hydrolase 5 (cellulase A) family.

It catalyses the reaction Endohydrolysis of (1-&gt;4)-beta-D-glucosidic linkages in cellulose, lichenin and cereal beta-D-glucans.. This is Endoglucanase (bglC) from Bacillus subtilis.